A 257-amino-acid chain; its full sequence is Flap endonuclease Xni (257 aa).

Asp-112 serves as a coordination point for Mg(2+). Positions 169–256 (EQKKLVEFWA…LGFSLKQLRL (88 aa)) constitute a 5'-3' exonuclease domain. K(+)-binding residues include Phe-179, Ala-180, Pro-188, Val-190, and Ile-193. An interaction with DNA region spans residues 192-197 (GIGTKS).

Belongs to the Xni family. Requires Mg(2+) as cofactor. K(+) is required as a cofactor.

Functionally, has flap endonuclease activity. During DNA replication, flap endonucleases cleave the 5'-overhanging flap structure that is generated by displacement synthesis when DNA polymerase encounters the 5'-end of a downstream Okazaki fragment. In Pseudoalteromonas translucida (strain TAC 125), this protein is Flap endonuclease Xni.